Consider the following 81-residue polypeptide: MSNKGQLLQDPFLNTLRREHVPVSIYLVNGIKLQGQIESFDQYVVLLRNTVTQMVYKHAISTIVPGRAVNFSAAENDDAAA.

In terms of domain architecture, Sm spans D10–V69.

It belongs to the Hfq family. Homohexamer.

Its function is as follows. RNA chaperone that binds small regulatory RNA (sRNAs) and mRNAs to facilitate mRNA translational regulation in response to envelope stress, environmental stress and changes in metabolite concentrations. Also binds with high specificity to tRNAs. The polypeptide is RNA-binding protein Hfq (Variovorax paradoxus (strain S110)).